The primary structure comprises 85 residues: Large ribosomal subunit protein bL27 (85 aa).

Positions 1–21 (MAHKKAGGSTRNGRDSNAKRL) are disordered.

This sequence belongs to the bacterial ribosomal protein bL27 family.

This is Large ribosomal subunit protein bL27 from Erwinia tasmaniensis (strain DSM 17950 / CFBP 7177 / CIP 109463 / NCPPB 4357 / Et1/99).